Reading from the N-terminus, the 328-residue chain is uncharacterized protein (328 aa).

The N-terminal stretch at 1–25 is a signal peptide; the sequence is MKLFNFKKLSMLIAGFTLVTSPALA.

It belongs to the bacterial solute-binding protein 7 family.

Its subcellular location is the periplasm. This is an uncharacterized protein from Haemophilus influenzae (strain ATCC 51907 / DSM 11121 / KW20 / Rd).